Consider the following 158-residue polypeptide: Large ribosomal subunit protein bL35m (158 aa).

It belongs to the bacterial ribosomal protein bL35 family.

The protein resides in the mitochondrion. This Caenorhabditis elegans protein is Large ribosomal subunit protein bL35m (mrpl-35).